A 203-amino-acid polypeptide reads, in one-letter code: Somatotropin (203 aa).

Positions 1–17 (MNRVILLLSVMCVGVSS) are cleaved as a signal peptide. Gln18 carries the post-translational modification Pyrrolidone carboxylic acid. Intrachain disulfides connect Cys68/Cys176 and Cys193/Cys201.

This sequence belongs to the somatotropin/prolactin family.

Its subcellular location is the secreted. In terms of biological role, growth hormone plays an important role in growth control and is involved in the regulation of several anabolic processes. Implicated as an osmoregulatory substance important for seawater adaptation. In Verasper variegatus (Spotted flounder), this protein is Somatotropin (gh).